We begin with the raw amino-acid sequence, 503 residues long: Cytochrome P450 3A7 (503 aa).

Cys442 contributes to the heme binding site.

Belongs to the cytochrome P450 family. Heme serves as cofactor. In terms of tissue distribution, expressed in fetal liver (at protein level).

The protein localises to the endoplasmic reticulum membrane. It localises to the microsome membrane. The enzyme catalyses an organic molecule + reduced [NADPH--hemoprotein reductase] + O2 = an alcohol + oxidized [NADPH--hemoprotein reductase] + H2O + H(+). The catalysed reaction is 3beta-hydroxyandrost-5-en-17-one + reduced [NADPH--hemoprotein reductase] + O2 = 3beta,16alpha-dihydroxy-androst-5-en-17-one + oxidized [NADPH--hemoprotein reductase] + H2O + H(+). It carries out the reaction dehydroepiandrosterone 3-sulfate + reduced [NADPH--hemoprotein reductase] + O2 = 16alpha-hydroxydehydroepiandrosterone 3-sulfate + oxidized [NADPH--hemoprotein reductase] + H2O + H(+). It catalyses the reaction testosterone + reduced [NADPH--hemoprotein reductase] + O2 = 6beta,17beta-dihydroxyandrost-4-en-3-one + oxidized [NADPH--hemoprotein reductase] + H2O + H(+). The enzyme catalyses estrone + reduced [NADPH--hemoprotein reductase] + O2 = 2-hydroxyestrone + oxidized [NADPH--hemoprotein reductase] + H2O + H(+). The catalysed reaction is estrone + reduced [NADPH--hemoprotein reductase] + O2 = 4-hydroxyestrone + oxidized [NADPH--hemoprotein reductase] + H2O + H(+). It carries out the reaction estrone + reduced [NADPH--hemoprotein reductase] + O2 = 16alpha-hydroxyestrone + oxidized [NADPH--hemoprotein reductase] + H2O + H(+). It catalyses the reaction 17beta-estradiol + reduced [NADPH--hemoprotein reductase] + O2 = 2-hydroxy-17beta-estradiol + oxidized [NADPH--hemoprotein reductase] + H2O + H(+). The enzyme catalyses 17beta-estradiol + reduced [NADPH--hemoprotein reductase] + O2 = 6beta-hydroxyestradiol-17beta + oxidized [NADPH--hemoprotein reductase] + H2O + H(+). The catalysed reaction is all-trans-retinoate + reduced [NADPH--hemoprotein reductase] + O2 = all-trans-4-hydroxyretinoate + oxidized [NADPH--hemoprotein reductase] + H2O + H(+). It carries out the reaction all-trans-retinoate + reduced [NADPH--hemoprotein reductase] + O2 = all-trans-18-hydroxyretinoate + oxidized [NADPH--hemoprotein reductase] + H2O + H(+). Its pathway is steroid hormone biosynthesis. It functions in the pathway cofactor metabolism; retinol metabolism. A cytochrome P450 monooxygenase involved in the metabolism of steroid hormones and vitamins during embryogenesis. Mechanistically, uses molecular oxygen inserting one oxygen atom into a substrate, and reducing the second into a water molecule, with two electrons provided by NADPH via cytochrome P450 reductase (NADPH--hemoprotein reductase). Catalyzes the hydroxylation of carbon-hydrogen bonds. Metabolizes 3beta-hydroxyandrost-5-en-17-one (dehydroepiandrosterone, DHEA), a precursor in the biosynthesis of androgen and estrogen steroid hormones. Exhibits high catalytic activity for the formation of hydroxyestrogens from estrone (E1), particularly D-ring hydroxylated estrone at the C16-alpha position. Mainly hydroxylates all trans-retinoic acid (atRA) to 4-hydroxyretinoate and may play a role in atRA clearance during fetal development. Also involved in the oxidative metabolism of xenobiotics including anticonvulsants. This Homo sapiens (Human) protein is Cytochrome P450 3A7.